The chain runs to 401 residues: Phosphoglycerate kinase (401 aa).

Residues Asp20–Asn22, Arg35, His58–Arg61, Arg117, and Arg154 each bind substrate. ATP contacts are provided by residues Lys204, Gly298, Glu329, and Gly358–Ser361.

Belongs to the phosphoglycerate kinase family. In terms of assembly, monomer.

The protein resides in the cytoplasm. It catalyses the reaction (2R)-3-phosphoglycerate + ATP = (2R)-3-phospho-glyceroyl phosphate + ADP. The protein operates within carbohydrate degradation; glycolysis; pyruvate from D-glyceraldehyde 3-phosphate: step 2/5. The protein is Phosphoglycerate kinase of Bifidobacterium longum (strain DJO10A).